We begin with the raw amino-acid sequence, 222 residues long: uncharacterized protein (222 aa).

4 consecutive transmembrane segments (helical) span residues 25 to 45, 80 to 100, 111 to 131, and 160 to 180; these read LLWL…PATA, LLGA…ALIY, FAIM…FPLL, and LALT…VPFF.

It localises to the cell membrane. This is an uncharacterized protein from Bacillus subtilis (strain 168).